Here is a 545-residue protein sequence, read N- to C-terminus: Chaperonin GroEL (545 aa).

ATP-binding positions include 30–33, Lys-51, 87–91, Gly-415, and Asp-496; these read TLGP and DGTTT.

This sequence belongs to the chaperonin (HSP60) family. As to quaternary structure, forms a cylinder of 14 subunits composed of two heptameric rings stacked back-to-back. Interacts with the co-chaperonin GroES.

It localises to the cytoplasm. It catalyses the reaction ATP + H2O + a folded polypeptide = ADP + phosphate + an unfolded polypeptide.. Its function is as follows. Together with its co-chaperonin GroES, plays an essential role in assisting protein folding. The GroEL-GroES system forms a nano-cage that allows encapsulation of the non-native substrate proteins and provides a physical environment optimized to promote and accelerate protein folding. The chain is Chaperonin GroEL from Haemophilus influenzae (strain 86-028NP).